The following is a 959-amino-acid chain: Alanine--tRNA ligase (959 aa).

S389 is modified (phosphoserine). The Zn(2+) site is built by H606, H610, C725, and H729.

Belongs to the class-II aminoacyl-tRNA synthetase family. As to quaternary structure, monomer. It depends on Zn(2+) as a cofactor.

It is found in the mitochondrion. Its subcellular location is the cytoplasm. It catalyses the reaction tRNA(Ala) + L-alanine + ATP = L-alanyl-tRNA(Ala) + AMP + diphosphate. In terms of biological role, catalyzes the attachment of alanine to tRNA(Ala) in a two-step reaction: alanine is first activated by ATP to form Ala-AMP and then transferred to the acceptor end of tRNA(Ala). Also edits incorrectly charged tRNA(Ala) via its editing domain. In Schizosaccharomyces pombe (strain 972 / ATCC 24843) (Fission yeast), this protein is Alanine--tRNA ligase (ala1).